Reading from the N-terminus, the 205-residue chain is Large ribosomal subunit protein uL3c (205 aa).

The disordered stretch occupies residues 127–153 (HFSRGPMSHGSKNHRQPGSIGAGTTPG).

Belongs to the universal ribosomal protein uL3 family. In terms of assembly, part of the 50S ribosomal subunit.

Its subcellular location is the plastid. It localises to the chloroplast. In terms of biological role, one of the primary rRNA binding proteins, it binds directly near the 3'-end of the 23S rRNA, where it nucleates assembly of the 50S subunit. The polypeptide is Large ribosomal subunit protein uL3c (rpl3) (Porphyra purpurea (Red seaweed)).